A 184-amino-acid chain; its full sequence is dCTP deaminase (184 aa).

DCTP-binding positions include K107–R112, T131–E133, Q152, Y166, and Q176. E133 acts as the Proton donor/acceptor in catalysis.

It belongs to the dCTP deaminase family. As to quaternary structure, homotrimer.

The catalysed reaction is dCTP + H2O + H(+) = dUTP + NH4(+). Its pathway is pyrimidine metabolism; dUMP biosynthesis; dUMP from dCTP (dUTP route): step 1/2. Its function is as follows. Catalyzes the deamination of dCTP to dUTP. In Erythrobacter litoralis (strain HTCC2594), this protein is dCTP deaminase.